The primary structure comprises 351 residues: Photosystem II D2 protein 2 (351 aa).

Residues 39 to 59 (CAFLSIGGWFTGTTFVTSWYT) traverse the membrane as a helical segment. Position 116 (H116) interacts with chlorophyll a. The chain crosses the membrane as a helical span at residues 123–139 (GFMLRQFEIARLVNVRP). Residues Q128 and N141 each coordinate pheophytin a. Residues 151-164 (VFVSVFLMYPLGQS) form a helical membrane-spanning segment. H196 provides a ligand contact to chlorophyll a. A helical membrane pass occupies residues 206 to 226 (GALLCAIHGATVENTLFEDTK). H213 and F260 together coordinate a plastoquinone. H213 provides a ligand contact to Fe cation. A Fe cation-binding site is contributed by H267. A helical membrane pass occupies residues 277–293 (GLWASAIGLVGIALNMR).

Belongs to the reaction center PufL/M/PsbA/D family. As to quaternary structure, PSII is composed of 1 copy each of membrane proteins PsbA, PsbB, PsbC, PsbD, PsbE, PsbF, PsbH, PsbI, PsbJ, PsbK, PsbL, PsbM, PsbT, PsbX, PsbY, PsbZ, Psb30/Ycf12, peripheral proteins PsbO, CyanoQ (PsbQ), PsbU, PsbV and a large number of cofactors. It forms dimeric complexes. The D1/D2 heterodimer binds P680, chlorophylls that are the primary electron donor of PSII, and subsequent electron acceptors. It shares a non-heme iron and each subunit binds pheophytin, quinone, additional chlorophylls, carotenoids and lipids. There is also a Cl(-1) ion associated with D1 and D2, which is required for oxygen evolution. The PSII complex binds additional chlorophylls, carotenoids and specific lipids. serves as cofactor.

The protein resides in the cellular thylakoid membrane. The enzyme catalyses 2 a plastoquinone + 4 hnu + 2 H2O = 2 a plastoquinol + O2. Photosystem II (PSII) is a light-driven water:plastoquinone oxidoreductase that uses light energy to abstract electrons from H(2)O, generating O(2) and a proton gradient subsequently used for ATP formation. It consists of a core antenna complex that captures photons, and an electron transfer chain that converts photonic excitation into a charge separation. The D1/D2 (PsbA/PsbD) reaction center heterodimer binds P680, the primary electron donor of PSII as well as several subsequent electron acceptors. D2 is needed for assembly of a stable PSII complex. The chain is Photosystem II D2 protein 2 from Acaryochloris marina (strain MBIC 11017).